The primary structure comprises 394 residues: Probable aspartate/prephenate aminotransferase (394 aa).

L-aspartate is bound by residues Gly40, Trp126, and Asn176. Lys239 is modified (N6-(pyridoxal phosphate)lysine). Arg370 lines the L-aspartate pocket.

It belongs to the class-I pyridoxal-phosphate-dependent aminotransferase family. In terms of assembly, homodimer. Pyridoxal 5'-phosphate serves as cofactor.

It is found in the cytoplasm. It catalyses the reaction L-aspartate + 2-oxoglutarate = oxaloacetate + L-glutamate. It carries out the reaction L-arogenate + oxaloacetate = prephenate + L-aspartate. Functionally, catalyzes the reversible conversion of aspartate and 2-oxoglutarate to glutamate and oxaloacetate. Can also transaminate prephenate in the presence of aspartate. This is Probable aspartate/prephenate aminotransferase (aspC) from Aquifex aeolicus (strain VF5).